The chain runs to 64 residues: UPF0434 protein Bcep18194_A5877 (64 aa).

The protein belongs to the UPF0434 family.

The polypeptide is UPF0434 protein Bcep18194_A5877 (Burkholderia lata (strain ATCC 17760 / DSM 23089 / LMG 22485 / NCIMB 9086 / R18194 / 383)).